A 502-amino-acid polypeptide reads, in one-letter code: Hexokinase-4 (502 aa).

A helical transmembrane segment spans residues 4 to 24 (VLVMLTAAAAVVACSVATVMV). Residues 35–491 (RRVVGLLKDL…SSIGSALLLA (457 aa)) form the Hexokinase domain. The tract at residues 90–228 (NGSETGTYYA…GLDIRVAALV (139 aa)) is hexokinase small subdomain. Residues Gly-104 and Ser-105 each coordinate ADP. D-glucose is bound by residues Thr-194, Lys-195, Asn-229, and Asp-230. The segment at 229–480 (NDTVGALSFG…QHVVVKAMED (252 aa)) is hexokinase large subdomain. Thr-253 lines the ADP pocket. D-glucose contacts are provided by Asn-256, Glu-284, and Glu-315. Gly-445 contacts ADP.

It belongs to the hexokinase family.

The protein resides in the mitochondrion outer membrane. The catalysed reaction is a D-hexose + ATP = a D-hexose 6-phosphate + ADP + H(+). It carries out the reaction D-fructose + ATP = D-fructose 6-phosphate + ADP + H(+). It catalyses the reaction D-glucose + ATP = D-glucose 6-phosphate + ADP + H(+). It participates in carbohydrate metabolism; hexose metabolism. Its pathway is carbohydrate degradation; glycolysis; D-glyceraldehyde 3-phosphate and glycerone phosphate from D-glucose: step 1/4. Its function is as follows. Fructose and glucose phosphorylating enzyme. May be involved in the phosphorylation of glucose during the export from mitochondrion to cytosol. This Arabidopsis thaliana (Mouse-ear cress) protein is Hexokinase-4.